The primary structure comprises 1902 residues: Plexin-B3 (1902 aa).

The signal sequence occupies residues 1-36 (MLTDFLQAPVMAPWSPFSLHLLLLFLPLLPLTRVHR). The Sema domain maps to 37 to 461 (FSVPNTSFNH…TAQQVDRILV (425 aa)). Over 37–1245 (FSVPNTSFNH…MMSTFPVEAQ (1209 aa)) the chain is Extracellular. Residue Asn-41 is glycosylated (N-linked (GlcNAc...) asparagine). Disulfide bonds link Cys-88-Cys-97 and Cys-122-Cys-130. Asn-221 is a glycosylation site (N-linked (GlcNAc...) asparagine). Disulfide bonds link Cys-257/Cys-360, Cys-273/Cys-305, and Cys-323/Cys-347. Positions 353-372 (DSPESYPCGDEHTPSPIAGR) are disordered. Residues Asn-416 and Asn-469 are each glycosylated (N-linked (GlcNAc...) asparagine). The 53-residue stretch at 463–515 (ACPQFPNCTTCLQARDPLCGWCILQGRCTRRGECGRAAQPNHWLWSYEDNHCP) folds into the PSI 1 domain. Intrachain disulfides connect Cys-464/Cys-481, Cys-470/Cys-514, Cys-473/Cys-490, Cys-484/Cys-496, and Cys-551/Cys-569. PSI domains are found at residues 609–671 (DCSA…EACP) and 776–822 (DCAM…QLCP). Residues Asn-791, Asn-889, Asn-910, Asn-946, Asn-1090, and Asn-1207 are each glycosylated (N-linked (GlcNAc...) asparagine). IPT/TIG domains lie at 823–914 (IPSI…FTYQ), 915–1001 (DPVL…FRYT), 1003–1134 (NPQL…FLYQ), and 1154–1221 (KPGH…QMGN). The chain crosses the membrane as a helical span at residues 1246 to 1266 (LGLGMGAAVLIAAVLLLTLMY). Over 1267-1902 (RHKSKKALRD…ALVEYKVTDL (636 aa)) the chain is Cytoplasmic.

This sequence belongs to the plexin family. In terms of assembly, binds MET and MST1R. Interacts with RIT2/RIN. May form homodimers (via Sema domain). Interacts (via cytoplasmic domain) with FSCN1, ARHGDIA and RAC1. In terms of tissue distribution, expressed in brain (at protein level). In cerebellum, strongest expression detected in Purkinje and granular cells. Detected at very low levels in several fetal tissues, including dorsal root ganglia (DRG), heart, lung, optic bulb, brain and liver.

It is found in the cell membrane. Receptor for SEMA5A that plays a role in axon guidance, invasive growth and cell migration. Stimulates neurite outgrowth and mediates Ca(2+)/Mg(2+)-dependent cell aggregation. In glioma cells, SEMA5A stimulation of PLXNB3 results in the disassembly of F-actin stress fibers, disruption of focal adhesions and cellular collapse as well as inhibition of cell migration and invasion through ARHGDIA-mediated inactivation of RAC1. Seem to be non-essential for normal development and function of the central nervous system. The sequence is that of Plexin-B3 (Plxnb3) from Mus musculus (Mouse).